The following is a 255-amino-acid chain: Coiled-coil domain-containing 92B (255 aa).

Positions 28-90 form a coiled coil; it reads LRDLHLEILR…AAANAELRRE (63 aa). Residues 149-255 are disordered; the sequence is QRLQAPRPGP…SQPSAPGDPE (107 aa). The span at 166–177 shows a compositional bias: basic residues; that stretch reads PRRRALRARRPP. The span at 242–255 shows a compositional bias: pro residues; the sequence is QPAPSQPSAPGDPE.

The polypeptide is Coiled-coil domain-containing 92B (Homo sapiens (Human)).